Consider the following 364-residue polypeptide: DNA polymerase IV (364 aa).

The UmuC domain maps to 6 to 186 (IIHIDMDAFY…LPIESFWGVG (181 aa)). Asp-10 and Asp-104 together coordinate Mg(2+). Glu-105 is a catalytic residue.

Belongs to the DNA polymerase type-Y family. In terms of assembly, monomer. It depends on Mg(2+) as a cofactor.

It localises to the cytoplasm. The enzyme catalyses DNA(n) + a 2'-deoxyribonucleoside 5'-triphosphate = DNA(n+1) + diphosphate. In terms of biological role, poorly processive, error-prone DNA polymerase involved in untargeted mutagenesis. Copies undamaged DNA at stalled replication forks, which arise in vivo from mismatched or misaligned primer ends. These misaligned primers can be extended by PolIV. Exhibits no 3'-5' exonuclease (proofreading) activity. May be involved in translesional synthesis, in conjunction with the beta clamp from PolIII. The polypeptide is DNA polymerase IV (Bacteroides fragilis (strain YCH46)).